The sequence spans 119 residues: Phosphoribosyl-AMP cyclohydrolase (119 aa).

Asp71 contributes to the Mg(2+) binding site. Cys72 contributes to the Zn(2+) binding site. Mg(2+) is bound by residues Asp73 and Asp75. Residues Cys90 and Cys97 each coordinate Zn(2+).

It belongs to the PRA-CH family. As to quaternary structure, homodimer. Requires Mg(2+) as cofactor. It depends on Zn(2+) as a cofactor.

It is found in the cytoplasm. The enzyme catalyses 1-(5-phospho-beta-D-ribosyl)-5'-AMP + H2O = 1-(5-phospho-beta-D-ribosyl)-5-[(5-phospho-beta-D-ribosylamino)methylideneamino]imidazole-4-carboxamide. It participates in amino-acid biosynthesis; L-histidine biosynthesis; L-histidine from 5-phospho-alpha-D-ribose 1-diphosphate: step 3/9. Catalyzes the hydrolysis of the adenine ring of phosphoribosyl-AMP. This Brucella abortus (strain 2308) protein is Phosphoribosyl-AMP cyclohydrolase.